A 249-amino-acid chain; its full sequence is (S)-1-Phenylethanol dehydrogenase (249 aa).

NAD(+)-binding positions include 17–19 (NGI), D38, 61–63 (CDV), N89, and Y93. S141 serves as a coordination point for substrate. The active-site Proton acceptor is Y154. NAD(+)-binding positions include K158, 184–187 (PSLV), and T191.

The protein belongs to the short-chain dehydrogenases/reductases (SDR) family. As to quaternary structure, homotetramer.

It carries out the reaction (S)-1-phenylethanol + NAD(+) = acetophenone + NADH + H(+). Catalyzes the NAD-dependent stereospecific oxidation of (S)-1-phenylethanol to acetophenone in the degradation of ethylbenzene. This Aromatoleum aromaticum (strain DSM 19018 / LMG 30748 / EbN1) (Azoarcus sp. (strain EbN1)) protein is (S)-1-Phenylethanol dehydrogenase (ped).